Consider the following 161-residue polypeptide: Sterile alpha motif domain-containing protein 12 (161 aa).

The segment at 44–64 (QKVPDQKGTPKRLQGEAETAK) is disordered. The region spanning 77-143 (WTQQDVCKWL…LQQVLQLKVR (67 aa)) is the SAM domain.

The polypeptide is Sterile alpha motif domain-containing protein 12 (Samd12) (Mus musculus (Mouse)).